A 1009-amino-acid polypeptide reads, in one-letter code: MSDENENGRPGGRTPMTLKPRQGSVSAGVVKQSFSHGRTKTVVVETKRTRTHAPASGNLAAPSSAERRHGEAPAPRPAPPQGGGGGSAGGLSQEELRARQRVVDAAREAQARQVAEQAAAEARARAAQEAAQREAAAKAAAERAAAAPPPVAQAPAAPAPAAPVTPPPAAPQAPRPVAQAPVAPSAPRQDAPRQDTRAAAPGQTRTYEPSRDRRDDRPSTTTYRPAPQGDRPFNQRAPRPDANANFGQRAPRPEGDRPRGPRPDGDRPQGDRGGYRGDRPQGDRPQGDRPQQTVRYSALAPRPAPGARGPGGPPRGPRPGVPAAAPATPEIQRATRSAPRPGGGAMDRRPDEDDDRRKNAAPNKAVSRVKGAPQRREGRLTIQAVAGDGDSADRMRSLASVRRAREREKEKRRGGAVEQARVAREVVIPDVITVQELSNRMAVRGVDIIKFLMRQGVMLKINDVIDNDTAELVATEFGHTVKRVSEADVEEGFIGADDHDEHMDLRPPVVTIMGHVDHGKTSLLDALRSTDVAAGEAGGITQHIGAYQVRLKDGQRVTFLDTPGHAAFSSMRARGANITDIVVLVVAGDDGVMPQTIEAIKHAKAAEVPIIVAVNKMDKPGSDPTRVVNELLQHEIVVESLGGDTQLIEVSAKARTGLDNLLEAILLQAEVLDLKANPDRSADGVVIEAKLDKGRGAVSTVLVNRGTLKRGDIVVAGSQWGKVRALLNERNEQLQEAGPATPVEILGLDGVPSPGDAFAVVENEARARELTEYRIRLKREKSMAPVGAGASMADMMAKLQDKKLKELPLVIKADVQGSAEAIIGSLDKMATDEVRARIILSGAGAISESDVMLAKGAGAPVIGFNVRASAQARALAEREGVEIRYYAIIYDLLDDIKGVLSGMLAPIQRETFLGNAEVLQAFDISKIGKVAGCKVTEGVVRKGAKVRIIRQDIVVLELGTLQTLKRFKDEVNEVPVGQECGMMFAGFQDIKVGDTIECFTVEEIKRQLD.

The tract at residues 1-415 is disordered; that stretch reads MSDENENGRP…EREKEKRRGG (415 aa). Basic and acidic residues predominate over residues 94-110; the sequence is EELRARQRVVDAAREAQ. Low complexity predominate over residues 111 to 121; that stretch reads ARQVAEQAAAE. A compositionally biased stretch (basic and acidic residues) spans 122-136; the sequence is ARARAAQEAAQREAA. The span at 137 to 146 shows a compositional bias: low complexity; sequence AKAAAERAAA. Over residues 147–174 the composition is skewed to pro residues; that stretch reads APPPVAQAPAAPAPAAPVTPPPAAPQAP. Low complexity predominate over residues 175–189; it reads RPVAQAPVAPSAPRQ. 2 stretches are compositionally biased toward basic and acidic residues: residues 208–218 and 251–287; these read EPSRDRRDDRP and PRPE…RPQG. The segment covering 311–320 has biased composition (pro residues); it reads GGPPRGPRPG. Basic and acidic residues-rich tracts occupy residues 346–358 and 403–415; these read MDRR…DRRK and RARE…RRGG. Residues 505-675 form the tr-type G domain; it reads LRPPVVTIMG…LLQAEVLDLK (171 aa). The tract at residues 514-521 is G1; that stretch reads GHVDHGKT. 514-521 contributes to the GTP binding site; sequence GHVDHGKT. Residues 539 to 543 form a G2 region; that stretch reads GITQH. A G3 region spans residues 561–564; the sequence is DTPG. Residues 561–565 and 615–618 each bind GTP; these read DTPGH and NKMD. The G4 stretch occupies residues 615–618; the sequence is NKMD. The G5 stretch occupies residues 651–653; it reads SAK.

The protein belongs to the TRAFAC class translation factor GTPase superfamily. Classic translation factor GTPase family. IF-2 subfamily.

It is found in the cytoplasm. Its function is as follows. One of the essential components for the initiation of protein synthesis. Protects formylmethionyl-tRNA from spontaneous hydrolysis and promotes its binding to the 30S ribosomal subunits. Also involved in the hydrolysis of GTP during the formation of the 70S ribosomal complex. The polypeptide is Translation initiation factor IF-2 (Caulobacter vibrioides (strain ATCC 19089 / CIP 103742 / CB 15) (Caulobacter crescentus)).